Consider the following 358-residue polypeptide: Peptide chain release factor 1 (358 aa).

Gln-233 carries the post-translational modification N5-methylglutamine.

This sequence belongs to the prokaryotic/mitochondrial release factor family. Methylated by PrmC. Methylation increases the termination efficiency of RF1.

The protein resides in the cytoplasm. Its function is as follows. Peptide chain release factor 1 directs the termination of translation in response to the peptide chain termination codons UAG and UAA. In Clostridium botulinum (strain ATCC 19397 / Type A), this protein is Peptide chain release factor 1.